We begin with the raw amino-acid sequence, 734 residues long: Ribosome-releasing factor 2, mitochondrial (734 aa).

The N-terminal 25 residues, 1 to 25 (MLQYCLLRRYRFLLRQHAQVIKRCY), are a transit peptide targeting the mitochondrion. The 277-residue stretch at 27 to 303 (GDIRNIGILA…AVNAYLPMPE (277 aa)) folds into the tr-type G domain. Residues 36 to 43 (AHIDAGKT), 100 to 104 (DTPGH), and 154 to 157 (NKMD) contribute to the GTP site.

The protein belongs to the TRAFAC class translation factor GTPase superfamily. Classic translation factor GTPase family. EF-G/EF-2 subfamily.

The protein resides in the mitochondrion. Mitochondrial GTPase that mediates the disassembly of ribosomes from messenger RNA at the termination of mitochondrial protein biosynthesis. Not involved in the GTP-dependent ribosomal translocation step during translation elongation. The polypeptide is Ribosome-releasing factor 2, mitochondrial (Drosophila grimshawi (Hawaiian fruit fly)).